The sequence spans 238 residues: Succinate dehydrogenase iron-sulfur subunit (238 aa).

A 2Fe-2S ferredoxin-type domain is found at 8-97 (YRYNPDVDDA…KIVIRPLPGL (90 aa)). Residues C55, C60, and C75 each coordinate [2Fe-2S] cluster. The 4Fe-4S ferredoxin-type domain occupies 139-169 (QREKLDGLYECILCACCSTSCPSFWWNPDKF). C149, C152, and C155 together coordinate [4Fe-4S] cluster. C159 is a [3Fe-4S] cluster binding site. W164 is a binding site for a ubiquinone. [3Fe-4S] cluster contacts are provided by C206 and C212. Position 216 (C216) interacts with [4Fe-4S] cluster.

This sequence belongs to the succinate dehydrogenase/fumarate reductase iron-sulfur protein family. Part of an enzyme complex containing four subunits: a flavoprotein, an iron-sulfur, cytochrome b-556, and a hydrophobic anchor protein. The complex forms trimers. The cofactor is [2Fe-2S] cluster. Requires [3Fe-4S] cluster as cofactor. It depends on [4Fe-4S] cluster as a cofactor.

It localises to the cell inner membrane. The enzyme catalyses a quinone + succinate = fumarate + a quinol. It participates in carbohydrate metabolism; tricarboxylic acid cycle; fumarate from succinate (bacterial route): step 1/1. In terms of biological role, two distinct, membrane-bound, FAD-containing enzymes are responsible for the catalysis of fumarate and succinate interconversion; the fumarate reductase is used in anaerobic growth, and the succinate dehydrogenase is used in aerobic growth. In Escherichia coli (strain K12), this protein is Succinate dehydrogenase iron-sulfur subunit (sdhB).